A 431-amino-acid polypeptide reads, in one-letter code: Chaperone SurA (431 aa).

An N-terminal signal peptide occupies residues 1-20; the sequence is MKNWRTFILGLALCANGALA. PpiC domains are found at residues 171-272 and 282-382; these read GAEF…KVND and VTEV…QLID.

The protein resides in the periplasm. It catalyses the reaction [protein]-peptidylproline (omega=180) = [protein]-peptidylproline (omega=0). In terms of biological role, chaperone involved in the correct folding and assembly of outer membrane proteins. Recognizes specific patterns of aromatic residues and the orientation of their side chains, which are found more frequently in integral outer membrane proteins. May act in both early periplasmic and late outer membrane-associated steps of protein maturation. This is Chaperone SurA from Sodalis glossinidius (strain morsitans).